Consider the following 362-residue polypeptide: 2-aminoethylphosphonate--pyruvate transaminase (362 aa).

Lys193 is modified (N6-(pyridoxal phosphate)lysine).

This sequence belongs to the class-V pyridoxal-phosphate-dependent aminotransferase family. PhnW subfamily. Homodimer. The cofactor is pyridoxal 5'-phosphate.

The catalysed reaction is (2-aminoethyl)phosphonate + pyruvate = phosphonoacetaldehyde + L-alanine. In terms of biological role, involved in phosphonate degradation. This chain is 2-aminoethylphosphonate--pyruvate transaminase, found in Bacteroides fragilis (strain ATCC 25285 / DSM 2151 / CCUG 4856 / JCM 11019 / LMG 10263 / NCTC 9343 / Onslow / VPI 2553 / EN-2).